Here is a 34-residue protein sequence, read N- to C-terminus: Unknown protein 5 (34 aa).

This is Unknown protein 5 from Pseudotsuga menziesii (Douglas-fir).